The primary structure comprises 186 residues: Peptidyl-tRNA hydrolase (186 aa).

Tyr-16 is a tRNA binding site. The active-site Proton acceptor is His-21. The tRNA site is built by Tyr-66, Asn-68, and Asn-114.

Belongs to the PTH family. As to quaternary structure, monomer.

The protein resides in the cytoplasm. It carries out the reaction an N-acyl-L-alpha-aminoacyl-tRNA + H2O = an N-acyl-L-amino acid + a tRNA + H(+). In terms of biological role, hydrolyzes ribosome-free peptidyl-tRNAs (with 1 or more amino acids incorporated), which drop off the ribosome during protein synthesis, or as a result of ribosome stalling. Catalyzes the release of premature peptidyl moieties from peptidyl-tRNA molecules trapped in stalled 50S ribosomal subunits, and thus maintains levels of free tRNAs and 50S ribosomes. The chain is Peptidyl-tRNA hydrolase from Ureaplasma urealyticum serovar 10 (strain ATCC 33699 / Western).